Here is a 726-residue protein sequence, read N- to C-terminus: Beta-glucosidase cel3A (726 aa).

The first 20 residues, M1–A20, serve as a signal peptide directing secretion. N-linked (GlcNAc...) asparagine glycans are attached at residues N223 and N592.

It belongs to the glycosyl hydrolase 3 family.

The protein resides in the secreted. The enzyme catalyses Hydrolysis of terminal, non-reducing beta-D-glucosyl residues with release of beta-D-glucose.. It participates in glycan metabolism; cellulose degradation. Its function is as follows. Beta-glucosidases are one of a number of cellulolytic enzymes involved in the degradation of cellulosic biomass. Catalyzes the last step releasing glucose from the inhibitory cellobiose. Has a broad substrate specificity but preferentially hydrolyzes highly polymerized 1,3- and 1,4-beta-glucans. The sequence is that of Beta-glucosidase cel3A from Pyricularia oryzae (strain 70-15 / ATCC MYA-4617 / FGSC 8958) (Rice blast fungus).